The following is a 350-amino-acid chain: Kievitone hydratase (350 aa).

The N-terminal stretch at 1–19 (MMISSVLVAGVVAVSAALA) is a signal peptide.

In terms of assembly, homodimer. Glycosylated.

It localises to the secreted. It carries out the reaction kievitone hydrate = kievitone + H2O. In terms of biological role, converts fungitoxic kievitone to the less toxic kievitone hydrate, and thereby protects the pathogenic fungus against this phytoalexin. In Fusarium solani subsp. phaseoli (Nectria haematococca), this protein is Kievitone hydratase (khs).